A 241-amino-acid chain; its full sequence is tRNA pseudouridine synthase B (241 aa).

The active-site Nucleophile is D45.

It belongs to the pseudouridine synthase TruB family. Type 1 subfamily.

It catalyses the reaction uridine(55) in tRNA = pseudouridine(55) in tRNA. Its function is as follows. Responsible for synthesis of pseudouridine from uracil-55 in the psi GC loop of transfer RNAs. This chain is tRNA pseudouridine synthase B, found in Opitutus terrae (strain DSM 11246 / JCM 15787 / PB90-1).